A 290-amino-acid polypeptide reads, in one-letter code: Lipoyl synthase (290 aa).

The [4Fe-4S] cluster site is built by Cys-34, Cys-39, Cys-45, Cys-60, Cys-64, Cys-67, and Ser-273. The Radical SAM core domain maps to 46–262 (WNKRHATVMI…KYIAYSKGFL (217 aa)).

This sequence belongs to the radical SAM superfamily. Lipoyl synthase family. Requires [4Fe-4S] cluster as cofactor.

Its subcellular location is the cytoplasm. The enzyme catalyses [[Fe-S] cluster scaffold protein carrying a second [4Fe-4S](2+) cluster] + N(6)-octanoyl-L-lysyl-[protein] + 2 oxidized [2Fe-2S]-[ferredoxin] + 2 S-adenosyl-L-methionine + 4 H(+) = [[Fe-S] cluster scaffold protein] + N(6)-[(R)-dihydrolipoyl]-L-lysyl-[protein] + 4 Fe(3+) + 2 hydrogen sulfide + 2 5'-deoxyadenosine + 2 L-methionine + 2 reduced [2Fe-2S]-[ferredoxin]. It participates in protein modification; protein lipoylation via endogenous pathway; protein N(6)-(lipoyl)lysine from octanoyl-[acyl-carrier-protein]: step 2/2. Catalyzes the radical-mediated insertion of two sulfur atoms into the C-6 and C-8 positions of the octanoyl moiety bound to the lipoyl domains of lipoate-dependent enzymes, thereby converting the octanoylated domains into lipoylated derivatives. This is Lipoyl synthase from Wolbachia pipientis subsp. Culex pipiens (strain wPip).